The chain runs to 207 residues: Large ribosomal subunit protein bL25 (207 aa).

The segment at 171-207 (EEETVVTVSAPRAEEEPTTTEAPEPEAVHGNDEEPVE) is disordered. The segment covering 196–207 (EAVHGNDEEPVE) has biased composition (basic and acidic residues).

This sequence belongs to the bacterial ribosomal protein bL25 family. CTC subfamily. Part of the 50S ribosomal subunit; part of the 5S rRNA/L5/L18/L25 subcomplex. Contacts the 5S rRNA. Binds to the 5S rRNA independently of L5 and L18.

This is one of the proteins that binds to the 5S RNA in the ribosome where it forms part of the central protuberance. This Listeria innocua serovar 6a (strain ATCC BAA-680 / CLIP 11262) protein is Large ribosomal subunit protein bL25.